The following is a 366-amino-acid chain: Isocitrate dehydrogenase [NAD] subunit alpha, mitochondrial (366 aa).

A mitochondrion-targeting transit peptide spans 1–27; it reads MAGPAWISKVSRLLGAFHNQKQVTRGF. An N6-succinyllysine modification is found at Lys-77. A Phosphothreonine modification is found at Thr-101. Substrate contacts are provided by Arg-115, Arg-125, and Arg-146. At Lys-223 the chain carries N6-acetyllysine. Mg(2+) is bound by residues Asp-233, Asp-257, and Asp-261. At Lys-343 the chain carries N6-acetyllysine; alternate. N6-succinyllysine; alternate is present on Lys-343. N6-succinyllysine is present on Lys-350.

It belongs to the isocitrate and isopropylmalate dehydrogenases family. As to quaternary structure, heterooligomer of subunits alpha (IDH3A), beta (IDH3B), and gamma (IDH3G) in the apparent ratio of 2:1:1. The heterodimer containing one IDH3A and one IDH3B subunit and the heterodimer containing one IDH3A and one IDH3G subunit assemble into a heterotetramer (which contains two subunits of IDH3A, one of IDH3B and one of IDH3G) and further into the heterooctamer. Mg(2+) serves as cofactor. The cofactor is Mn(2+).

It is found in the mitochondrion. It catalyses the reaction D-threo-isocitrate + NAD(+) = 2-oxoglutarate + CO2 + NADH. Its activity is regulated as follows. The heterotetramer and the heterodimer composed of IDH3A and IDH3G subunits can be allosterically activated by citrate (CIT) or/and ADP, and the two activators can act independently or synergistically. The heterodimer composed of IDH3A and IDH3B subunits cannot be allosterically regulated and the allosteric regulation of the heterotetramer is through the IDH3G subunit and not the IDH3B subunit. The IDH3G subunit contains the allosteric site which consists of a CIT-binding site and an ADP-binding site, and the binding of CIT and ADP causes conformational changes at the allosteric site which are transmitted to the active site in the catalytic subunit (IDH3A) through a cascade of conformational changes at the heterodimer interface, leading to stabilization of the isocitrate-binding at the active site and thus activation of the enzyme. ATP can activate the heterotetramer and the heterodimer composed of IDH3A and IDH3G subunits at low concentrations but inhibits their activities at high concentrations, whereas ATP exhibits only inhibitory effect on the heterodimer composed of IDH3A and IDH3B subunits. Catalytic subunit of the enzyme which catalyzes the decarboxylation of isocitrate (ICT) into alpha-ketoglutarate. The heterodimer composed of the alpha (IDH3A) and beta (IDH3B) subunits and the heterodimer composed of the alpha (IDH3A) and gamma (IDH3G) subunits, have considerable basal activity but the full activity of the heterotetramer (containing two subunits of IDH3A, one of IDH3B and one of IDH3G) requires the assembly and cooperative function of both heterodimers. The polypeptide is Isocitrate dehydrogenase [NAD] subunit alpha, mitochondrial (Bos taurus (Bovine)).